Here is a 51-residue protein sequence, read N- to C-terminus: Large ribosomal subunit protein eL39 (51 aa).

The protein belongs to the eukaryotic ribosomal protein eL39 family.

The sequence is that of Large ribosomal subunit protein eL39 (RpL39) from Plutella xylostella (Diamondback moth).